The following is a 571-amino-acid chain: Proline--tRNA ligase (571 aa).

Belongs to the class-II aminoacyl-tRNA synthetase family. ProS type 1 subfamily. Homodimer.

The protein localises to the cytoplasm. The enzyme catalyses tRNA(Pro) + L-proline + ATP = L-prolyl-tRNA(Pro) + AMP + diphosphate. In terms of biological role, catalyzes the attachment of proline to tRNA(Pro) in a two-step reaction: proline is first activated by ATP to form Pro-AMP and then transferred to the acceptor end of tRNA(Pro). As ProRS can inadvertently accommodate and process non-cognate amino acids such as alanine and cysteine, to avoid such errors it has two additional distinct editing activities against alanine. One activity is designated as 'pretransfer' editing and involves the tRNA(Pro)-independent hydrolysis of activated Ala-AMP. The other activity is designated 'posttransfer' editing and involves deacylation of mischarged Ala-tRNA(Pro). The misacylated Cys-tRNA(Pro) is not edited by ProRS. The chain is Proline--tRNA ligase from Leuconostoc citreum (strain KM20).